The sequence spans 77 residues: Small ribosomal subunit protein bS21 (77 aa).

Residues 38 to 52 (KPSEKRAREKAEAIR) are compositionally biased toward basic and acidic residues. Residues 38–77 (KPSEKRAREKAEAIRRTRKLARKRAQREGIVSNGRTASVR) form a disordered region. Over residues 53–62 (RTRKLARKRA) the composition is skewed to basic residues.

The protein belongs to the bacterial ribosomal protein bS21 family.

The protein is Small ribosomal subunit protein bS21 of Bartonella bacilliformis (strain ATCC 35685 / KC583 / Herrer 020/F12,63).